We begin with the raw amino-acid sequence, 476 residues long: Aspartyl/glutamyl-tRNA(Asn/Gln) amidotransferase subunit B (476 aa).

Belongs to the GatB/GatE family. GatB subfamily. As to quaternary structure, heterotrimer of A, B and C subunits.

The catalysed reaction is L-glutamyl-tRNA(Gln) + L-glutamine + ATP + H2O = L-glutaminyl-tRNA(Gln) + L-glutamate + ADP + phosphate + H(+). The enzyme catalyses L-aspartyl-tRNA(Asn) + L-glutamine + ATP + H2O = L-asparaginyl-tRNA(Asn) + L-glutamate + ADP + phosphate + 2 H(+). Allows the formation of correctly charged Asn-tRNA(Asn) or Gln-tRNA(Gln) through the transamidation of misacylated Asp-tRNA(Asn) or Glu-tRNA(Gln) in organisms which lack either or both of asparaginyl-tRNA or glutaminyl-tRNA synthetases. The reaction takes place in the presence of glutamine and ATP through an activated phospho-Asp-tRNA(Asn) or phospho-Glu-tRNA(Gln). The protein is Aspartyl/glutamyl-tRNA(Asn/Gln) amidotransferase subunit B of Neisseria meningitidis serogroup B (strain ATCC BAA-335 / MC58).